We begin with the raw amino-acid sequence, 344 residues long: 2-methyl-6-phytyl-1,4-hydroquinone methyltransferase, chloroplastic (344 aa).

The transit peptide at 1–62 (MACSMLNGVD…LTTVTKCTLS (62 aa)) directs the protein to the chloroplast. Residues 63–313 (ASERPASQPR…PVHPLVFLYR (251 aa)) lie on the Chloroplast intermembrane side of the membrane. An SAM motif I region spans residues 121–130 (VVDVGGGTGF). The tract at residues 166–179 (CRIIEGDAEDLPFP) is SAM motif II. Residues 207 to 220 (RVLKLGGKACLIGP) form an SAM motif III region. The chain crosses the membrane as a helical span at residues 314–334 (FLLGALASTYYVLVPIYMWIK). Residues 335 to 344 (DKIFPKGMPL) lie on the Stromal side of the membrane.

This sequence belongs to the class I-like SAM-binding methyltransferase superfamily. MPBQ/MBSQ MT family.

The protein localises to the plastid. The protein resides in the chloroplast inner membrane. The enzyme catalyses 2-methyl-6-phytyl-1,4-benzene-1,4-diol + S-adenosyl-L-methionine = 2,3-dimethyl-6-phytylbenzene-1,4-diol + S-adenosyl-L-homocysteine + H(+). The catalysed reaction is 2-methyl-6-(all-trans-nonaprenyl)benzene-1,4-diol + S-adenosyl-L-methionine = plastoquinol-9 + S-adenosyl-L-homocysteine + H(+). It carries out the reaction 6-geranylgeranyl-2-methylbenzene-1,4-diol + S-adenosyl-L-methionine = 6-geranylgeranyl-2,3-dimethylbenzene-1,4-diol + S-adenosyl-L-homocysteine + H(+). The protein operates within cofactor biosynthesis; tocopherol biosynthesis. Its function is as follows. Involved in a key methylation step in both tocopherols (vitamin E) and plastoquinone synthesis. Catalyzes the conversion of 2-methyl-6-phytyl-1,4-hydroquinone (MPBQ) to 2,3-dimethyl-6-phytyl-1,4-hydroquinone (DMPQ, a substrate for tocopherol cyclase), and 2-methyl-6-solanyl-1,4-benzoquinone (MSBQ) to plastoquinone. The chain is 2-methyl-6-phytyl-1,4-hydroquinone methyltransferase, chloroplastic from Spinacia oleracea (Spinach).